The following is an 82-amino-acid chain: Small ribosomal subunit protein bS16 (82 aa).

Belongs to the bacterial ribosomal protein bS16 family.

The chain is Small ribosomal subunit protein bS16 from Histophilus somni (strain 2336) (Haemophilus somnus).